A 447-amino-acid chain; its full sequence is Adenylosuccinate synthetase (447 aa).

GTP contacts are provided by residues 35–41 (GDEGKGK) and 63–65 (GHT). Catalysis depends on D36, which acts as the Proton acceptor. The Mg(2+) site is built by D36 and G63. Residues 36–39 (DEGK), 61–64 (NAGH), T153, R167, N245, T260, and R324 each bind IMP. The active-site Proton donor is the H64. 320 to 326 (VTTKRKR) contacts substrate. GTP-binding positions include R326, 352–354 (KLD), and 435–437 (GVG).

It belongs to the adenylosuccinate synthetase family. In terms of assembly, homodimer. Mg(2+) is required as a cofactor.

The protein resides in the cytoplasm. The catalysed reaction is IMP + L-aspartate + GTP = N(6)-(1,2-dicarboxyethyl)-AMP + GDP + phosphate + 2 H(+). Its pathway is purine metabolism; AMP biosynthesis via de novo pathway; AMP from IMP: step 1/2. Its function is as follows. Plays an important role in the de novo pathway and in the salvage pathway of purine nucleotide biosynthesis. Catalyzes the first committed step in the biosynthesis of AMP from IMP. Plays a role in the regulation of adult life span. The sequence is that of Adenylosuccinate synthetase from Drosophila melanogaster (Fruit fly).